An 88-amino-acid chain; its full sequence is Small ribosomal subunit protein uS15 (88 aa).

Belongs to the universal ribosomal protein uS15 family. As to quaternary structure, part of the 30S ribosomal subunit. Forms a bridge to the 50S subunit in the 70S ribosome, contacting the 23S rRNA.

One of the primary rRNA binding proteins, it binds directly to 16S rRNA where it helps nucleate assembly of the platform of the 30S subunit by binding and bridging several RNA helices of the 16S rRNA. Its function is as follows. Forms an intersubunit bridge (bridge B4) with the 23S rRNA of the 50S subunit in the ribosome. This Halothermothrix orenii (strain H 168 / OCM 544 / DSM 9562) protein is Small ribosomal subunit protein uS15.